A 427-amino-acid chain; its full sequence is L-glutamine:2-deoxy-scyllo-inosose aminotransferase (427 aa).

Positions 1–20 are disordered; it reads MPLQSSRLAVDNGTPVRGKP. K205 is subject to N6-(pyridoxal phosphate)lysine.

It belongs to the DegT/DnrJ/EryC1 family. L-glutamine:2-deoxy-scyllo-inosose/scyllo-inosose aminotransferase subfamily. Pyridoxal 5'-phosphate is required as a cofactor.

The catalysed reaction is 2-deoxy-L-scyllo-inosose + L-glutamine = 2-deoxy-scyllo-inosamine + 2-oxoglutaramate. It catalyses the reaction 3-amino-2,3-dideoxy-scyllo-inosose + L-glutamine = 2-deoxystreptamine + 2-oxoglutaramate. Its pathway is metabolic intermediate biosynthesis; 2-deoxystreptamine biosynthesis; 2-deoxystreptamine from D-glucose 6-phosphate: step 2/4. It participates in antibiotic biosynthesis; kanamycin biosynthesis. Catalyzes the PLP-dependent transamination of 2-deoxy-scyllo-inosose (2-DOI) to form 2-deoxy-scyllo-inosamine (2-DOIA) using L-glutamine as the amino donor. Also catalyzes the transamination of 3-amino-2,3-dideoxy-scyllo-inosose (keto-2-DOIA) into 2-deoxystreptamine (2-DOS). This chain is L-glutamine:2-deoxy-scyllo-inosose aminotransferase (kanB), found in Streptomyces kanamyceticus.